We begin with the raw amino-acid sequence, 296 residues long: Probable endonuclease 4 (296 aa).

The Zn(2+) site is built by His68, His109, Glu144, Asp178, His181, His213, Asp226, His228, and Glu258.

This sequence belongs to the AP endonuclease 2 family. Zn(2+) is required as a cofactor.

The enzyme catalyses Endonucleolytic cleavage to 5'-phosphooligonucleotide end-products.. Functionally, endonuclease IV plays a role in DNA repair. It cleaves phosphodiester bonds at apurinic or apyrimidinic (AP) sites, generating a 3'-hydroxyl group and a 5'-terminal sugar phosphate. In Staphylococcus saprophyticus subsp. saprophyticus (strain ATCC 15305 / DSM 20229 / NCIMB 8711 / NCTC 7292 / S-41), this protein is Probable endonuclease 4.